Here is a 640-residue protein sequence, read N- to C-terminus: Threonine--tRNA ligase (640 aa).

The TGS domain occupies methionine 1–threonine 61. The tract at residues aspartate 242–proline 533 is catalytic. Cysteine 333, histidine 384, and histidine 510 together coordinate Zn(2+).

This sequence belongs to the class-II aminoacyl-tRNA synthetase family. In terms of assembly, homodimer. It depends on Zn(2+) as a cofactor.

Its subcellular location is the cytoplasm. It carries out the reaction tRNA(Thr) + L-threonine + ATP = L-threonyl-tRNA(Thr) + AMP + diphosphate + H(+). In terms of biological role, catalyzes the attachment of threonine to tRNA(Thr) in a two-step reaction: L-threonine is first activated by ATP to form Thr-AMP and then transferred to the acceptor end of tRNA(Thr). Also edits incorrectly charged L-seryl-tRNA(Thr). In Prochlorococcus marinus (strain NATL1A), this protein is Threonine--tRNA ligase.